Consider the following 259-residue polypeptide: Imidazole glycerol phosphate synthase subunit HisF (259 aa).

Catalysis depends on residues D11 and D130.

The protein belongs to the HisA/HisF family. Heterodimer of HisH and HisF.

The protein localises to the cytoplasm. It carries out the reaction 5-[(5-phospho-1-deoxy-D-ribulos-1-ylimino)methylamino]-1-(5-phospho-beta-D-ribosyl)imidazole-4-carboxamide + L-glutamine = D-erythro-1-(imidazol-4-yl)glycerol 3-phosphate + 5-amino-1-(5-phospho-beta-D-ribosyl)imidazole-4-carboxamide + L-glutamate + H(+). It participates in amino-acid biosynthesis; L-histidine biosynthesis; L-histidine from 5-phospho-alpha-D-ribose 1-diphosphate: step 5/9. IGPS catalyzes the conversion of PRFAR and glutamine to IGP, AICAR and glutamate. The HisF subunit catalyzes the cyclization activity that produces IGP and AICAR from PRFAR using the ammonia provided by the HisH subunit. This chain is Imidazole glycerol phosphate synthase subunit HisF, found in Syntrophobacter fumaroxidans (strain DSM 10017 / MPOB).